The chain runs to 296 residues: Pantothenate synthetase (296 aa).

ATP is bound at residue 37-44; sequence MGALHTGH. The active-site Proton donor is the histidine 44. Glutamine 68 contributes to the (R)-pantoate binding site. Glutamine 68 is a beta-alanine binding site. Residue 160-163 coordinates ATP; sequence GQKD. Residue glutamine 166 coordinates (R)-pantoate. ATP-binding positions include valine 189 and 197 to 200; that span reads TSSR.

The protein belongs to the pantothenate synthetase family. Homodimer.

It localises to the cytoplasm. The enzyme catalyses (R)-pantoate + beta-alanine + ATP = (R)-pantothenate + AMP + diphosphate + H(+). Its pathway is cofactor biosynthesis; (R)-pantothenate biosynthesis; (R)-pantothenate from (R)-pantoate and beta-alanine: step 1/1. Functionally, catalyzes the condensation of pantoate with beta-alanine in an ATP-dependent reaction via a pantoyl-adenylate intermediate. This chain is Pantothenate synthetase, found in Thermobifida fusca (strain YX).